The chain runs to 72 residues: Translation initiation factor IF-1 (72 aa).

The region spanning 1–72 (MAKEDNFELE…SKGRITYRAR (72 aa)) is the S1-like domain.

It belongs to the IF-1 family. Component of the 30S ribosomal translation pre-initiation complex which assembles on the 30S ribosome in the order IF-2 and IF-3, IF-1 and N-formylmethionyl-tRNA(fMet); mRNA recruitment can occur at any time during PIC assembly.

It localises to the cytoplasm. One of the essential components for the initiation of protein synthesis. Stabilizes the binding of IF-2 and IF-3 on the 30S subunit to which N-formylmethionyl-tRNA(fMet) subsequently binds. Helps modulate mRNA selection, yielding the 30S pre-initiation complex (PIC). Upon addition of the 50S ribosomal subunit IF-1, IF-2 and IF-3 are released leaving the mature 70S translation initiation complex. The polypeptide is Translation initiation factor IF-1 (Saccharophagus degradans (strain 2-40 / ATCC 43961 / DSM 17024)).